The primary structure comprises 148 residues: Large ribosomal subunit protein uL11 (148 aa).

The segment at 89-108 is disordered; it reads EKKKGSGAHKPGKEKVGQVT.

Belongs to the universal ribosomal protein uL11 family. Part of the ribosomal stalk of the 50S ribosomal subunit. Interacts with L10 and the large rRNA to form the base of the stalk. L10 forms an elongated spine to which L12 dimers bind in a sequential fashion forming a multimeric L10(L12)X complex. One or more lysine residues are methylated.

In terms of biological role, forms part of the ribosomal stalk which helps the ribosome interact with GTP-bound translation factors. The protein is Large ribosomal subunit protein uL11 of Anaeromyxobacter dehalogenans (strain 2CP-1 / ATCC BAA-258).